The following is a 778-amino-acid chain: Probable potassium transporter 13 (778 aa).

Over 1–28 (MDVEGGGGGGGGAPPRGRNSWGWQKGTL) the chain is Cytoplasmic. A helical transmembrane segment spans residues 29–49 (LLAYQSFGVVYGDLCISPVYV). The Extracellular segment spans residues 50–72 (YKNTFSGKLRLHEEDEEILGVLS). A helical transmembrane segment spans residues 73–93 (LVFWSLTLIPLLKYIILVLGA). Residues 94–156 (DDNGEGGTFA…AFFEKHYSLR (63 aa)) are Cytoplasmic-facing. Residues 157–177 (VVLLLFVLMGTSMVIGDGVLT) traverse the membrane as a helical segment. Residues 178 to 199 (PTMSVLAAVSGLRIKFPELHEN) lie on the Extracellular side of the membrane. Residue asparagine 199 is glycosylated (N-linked (GlcNAc...) asparagine). A helical transmembrane segment spans residues 200 to 220 (YTVLLACVILIGLFALQHYGT). Residues 221–222 (RR) lie on the Cytoplasmic side of the membrane. A helical membrane pass occupies residues 223-243 (VGFLFAPILISWLTCIGGIGI). Topologically, residues 244–276 (YNIIKWNPSVIRALSPYYIYNFFRKAGKDGWSS) are extracellular. A helical membrane pass occupies residues 277–297 (LGGIVLCLTGAEAMFADLGHF). The Cytoplasmic segment spans residues 298-303 (SKLSLR). A helical membrane pass occupies residues 304 to 324 (LGFTIVVYPCLVLAYMGEAAY). Over 325–343 (LSKHREDLQSSFYKALPDR) the chain is Extracellular. A helical membrane pass occupies residues 344–364 (VFWPVLFIATLATAVGSQAII). The Cytoplasmic portion of the chain corresponds to 365–395 (SATFSIISQCRALGCFPRIKVVHTSSHVHGQ). Residues 396-416 (IYIPEVNWVLMSLCLAVTIGF) form a helical membrane-spanning segment. Over 417–424 (RDTEMIGN) the chain is Extracellular. The helical transmembrane segment at 425 to 445 (AYGLAVILVMCATTCLMFLVI) threads the bilayer. Residues 446 to 451 (TTVWNR) are Cytoplasmic-facing. A helical membrane pass occupies residues 452–472 (WVVWAAAFTVVFGSVELLYLS). Residues 473-477 (ACLAK) are Extracellular-facing. The helical transmembrane segment at 478 to 498 (VPHGGWLPLLLSLTTLLVMST) threads the bilayer. Residues 499 to 778 (WHYGTAMKQQ…LIEVGMAYRV (280 aa)) lie on the Cytoplasmic side of the membrane. The segment covering 655-677 (PATSSSGGSNQHAFDAGTTTSSC) has biased composition (polar residues). A disordered region spans residues 655–704 (PATSSSGGSNQHAFDAGTTTSSCEIDATAGGGGRRKVRFDNDGGGGGEEE).

Belongs to the HAK/KUP transporter (TC 2.A.72.3) family.

The protein localises to the membrane. High-affinity potassium transporter. The chain is Probable potassium transporter 13 (HAK13) from Oryza sativa subsp. japonica (Rice).